The sequence spans 529 residues: Potassium voltage-gated channel subfamily A member 6 (529 aa).

The segment at 1–33 (MRSEKSLTLAAPGEVRGPEGEQQDAGDFPEAGG) is disordered. The Cytoplasmic segment spans residues 1–171 (MRSEKSLTLA…LLFEYPESSG (171 aa)). Ser3 carries the phosphoserine modification. The helical transmembrane segment at 172 to 193 (PARGIAIVSVLVILISIVIFCL) threads the bilayer. Residues 194-262 (ETLPQFRVDG…TLGGSFFTDP (69 aa)) are Extracellular-facing. Residues 210–220 (GVSRVSPVSRG) are compositionally biased toward low complexity. The segment at 210 to 233 (GVSRVSPVSRGSQEEEEDEDDSYT) is disordered. Residues 263-284 (FFLVETLCIVWFTFELLVRFSA) form a helical membrane-spanning segment. Cys285 carries S-palmitoyl cysteine lipidation. The Cytoplasmic portion of the chain corresponds to 285–295 (CPSKPAFFRNI). Residues 296-316 (MNIIDLVAIFPYFITLGTELV) traverse the membrane as a helical segment. The Extracellular segment spans residues 317 to 337 (QQQEQQPASGGGGQNGQQAMS). A helical; Voltage-sensor transmembrane segment spans residues 338–358 (LAILRVIRLVRVFRIFKLSRH). The Cytoplasmic portion of the chain corresponds to 359-373 (SKGLQILGKTLQASM). Positions 360–373 (KGLQILGKTLQASM) are S4-S5 linker. The helical transmembrane segment at 374-395 (RELGLLIFFLFIGVILFSSAVY) threads the bilayer. Residues 396–409 (FAEADDDDSLFPSI) are Extracellular-facing. The helical intramembrane region spans 410 to 421 (PDAFWWAVVTMT). A Selectivity filter motif is present at residues 422-427 (TVGYGD). Residues 422 to 429 (TVGYGDMY) lie within the membrane without spanning it. The Extracellular segment spans residues 430–436 (PMTVGGK). The helical transmembrane segment at 437–465 (IVGSLCAIAGVLTIALPVPVIVSNFNYFY) threads the bilayer. Topologically, residues 466–529 (HRETEQEEQG…YAEKRMLTEV (64 aa)) are cytoplasmic. The tract at residues 488–513 (DLRATDNGLGKPDFPEANRERRPSYL) is disordered. The span at 500-510 (DFPEANRERRP) shows a compositional bias: basic and acidic residues. The residue at position 511 (Ser511) is a Phosphoserine; by PKA. Positions 527-529 (TEV) match the PDZ-binding motif.

Belongs to the potassium channel family. A (Shaker) (TC 1.A.1.2) subfamily. Kv1.6/KCNA6 sub-subfamily. In terms of assembly, homotetramer and heterotetramer of potassium channel proteins. Interacts with KCNAB1 and KCNAB2.

The protein resides in the cell membrane. It catalyses the reaction K(+)(in) = K(+)(out). Functionally, voltage-gated potassium channel that mediates transmembrane potassium transport in excitable membranes. Forms tetrameric potassium-selective channels through which potassium ions pass in accordance with their electrochemical gradient. The channel alternates between opened and closed conformations in response to the voltage difference across the membrane. Can form functional homotetrameric channels and heterotetrameric channels that contain variable proportions of KCNA1, KCNA2, KCNA4, KCNA6, and possibly other family members as well; channel properties depend on the type of alpha subunits that are part of the channel. Channel properties are modulated by cytoplasmic beta subunits that regulate the subcellular location of the alpha subunits and promote rapid inactivation. Homotetrameric channels display rapid activation and slow inactivation. The polypeptide is Potassium voltage-gated channel subfamily A member 6 (KCNA6) (Homo sapiens (Human)).